Here is a 1013-residue protein sequence, read N- to C-terminus: Nucleotide-binding oligomerization domain-containing protein 2 (1013 aa).

2 CARD domains span residues 1–82 and 107–178; these read MCSQ…AVQE and LQSH…HVQK. An ATG16L1-binding motif motif is present at residues 36 to 50; it reads WEVLSWEDYEGLRLV. Residues Thr212, Tyr225, Thr226, Gly275, Ser276, Gly277, Lys278, Ser279, and Thr280 each coordinate ADP. The tract at residues 214–247 is required for CARD9 binding; the sequence is DGAENLCLEDIYTENTLEVRTEVGMAGPLHKSPA. The region spanning 266–402 is the NACHT domain; the sequence is DTVLVVGEAG…RKVLTSRPDA (137 aa). Position 272–279 (272–279) interacts with ATP; the sequence is GEAGSGKS. The S-palmitoyl cysteine moiety is linked to residue Cys368. Residue His576 coordinates ADP. 9 LRR repeats span residues 764-785, 789-812, 817-838, 845-857, 873-893, 901-922, 929-949, 957-978, and 985-1005; these read RPVALQLDHNSVGDIGVEQLLP, ACKALYLRDNNISDRGICKLIEHA, QLQKLALFNNKLTDGCAHSVAQ, NFLALRLGNNHIT, SLQFLGFWGNKVGDKGAQALA, SLKWLSLVGNNIGSVGAQALAS, ALEELCLEENHLQDAGVCSLA, SLKVLKLSNNCITFVGAEALLQ, and TILEVWLRGNPFSPEEMEALS.

It belongs to the NOD1-NOD2 family. Homooligomer: homooligomerizes following muramyl dipeptide (MDP)-binding, promoting RIPK2 recruitment. Interacts (via CARD domain) with RIPK2 (via CARD domain). Following RIPK2 recruitment, RIPK2 homooligomerizes via its CARD domain and forms long filaments named RIPosomes. Interacts (via CARD domain) with ubiquitin; inhibiting interaction with RIPK2. Component of a signaling complex consisting of ARHGEF2, NOD2 and RIPK2. Interacts with ANKRD17 (via N-terminus). Interacts with HSPA1A; the interaction enhances NOD2 stability. Interacts (via both CARD domains) with HSP90; the interaction enhances NOD2 stability. Interacts (via CARD domain) with SOCS3; the interaction promotes NOD2 degradation. Interacts (via CARD domain) with ERBIN; the interaction inhibits activation of NOD2. Interacts with MAPKBP1; the interaction is enhanced in the presence of muramyl dipeptide (MDP) and inhibits NOD2 homooligomerization and activation. Interacts with INAVA; the interaction takes place upon Pattern recognition receptor (PRR) stimulation. Interacts (via NACHT domain) with CARD9. Interacts (via CARD domain) with CASP1; this interaction leads to IL1B processing. Also interacts with CASP4. Interacts with NLRP1; this interaction is enhanced in the presence of muramyl dipeptide (MDP) and leads to increased IL1B release. Interacts with NLRP12; this interaction promotes degradation of NOD2 through the ubiquitin-proteasome pathway. Interacts with ANKHD1, C10orf67, CHMP5, DOCK7, ENTR1, KRT15, LDOC1, PPP1R12C, PPP2R3B, TRIM41 and VIM. Interacts with MAVS; interaction takes place following single-stranded RNA (ssRNA)-binding. Interacts with ATG16L1. Interacts with IRGM; promoting IRGM 'Lys-63'-linked polyubiquitination, which is required for interactions with the core autophagy factors. In terms of processing, palmitoylated by ZDHHC5; palmitoylation is required for proper recruitment to the bacterial entry site and hence for proper signaling upon cognate peptidoglycan detection. Palmitoylation promotes localization to the cell membrane. Palmitoylation protects from SQSTM1/p62-dependent autophagic degradation. Post-translationally, polyubiquitinated by TRIM27, leading to proteasome-mediated degradation. Polyubiquitinated and degraded following muramyl dipeptide (MDP) stimulation, conferring MDP tolerance and preventing septic shock. Degraded via selective autophagy following interaction with IRGM. IRGM promotes NOD2-RIPK2 RIPosome recruitment to autophagosome membranes, promoting their SQSTM1/p62-dependent autophagic degradation. In terms of processing, O-glycosylated by OGT, O-GlcNAcylation increases protein stability.

It is found in the cell membrane. The protein localises to the basolateral cell membrane. The protein resides in the cytoplasm. It localises to the mitochondrion. ADP-binding promotes an inactive closed conformation. Its function is as follows. Pattern recognition receptor (PRR) that detects bacterial peptidoglycan fragments and other danger signals and plays an important role in gastrointestinal immunity. Specifically activated by muramyl dipeptide (MDP), a fragment of bacterial peptidoglycan found in every bacterial peptidoglycan type. NOD2 specifically recognizes and binds 6-O-phospho-MDP, the phosphorylated form of MDP, which is generated by NAGK. 6-O-phospho-MDP-binding triggers oligomerization that facilitates the binding and subsequent activation of the proximal adapter receptor-interacting RIPK2. Following recruitment, RIPK2 undergoes 'Met-1'- (linear) and 'Lys-63'-linked polyubiquitination by E3 ubiquitin-protein ligases XIAP, BIRC2, BIRC3 and the LUBAC complex, becoming a scaffolding protein for downstream effectors, triggering activation of the NF-kappa-B and MAP kinases signaling. This in turn leads to the transcriptional activation of hundreds of genes involved in immune response. Its ability to detect bacterial MDP plays a central role in maintaining the equilibrium between intestinal microbiota and host immune responses to control inflammation. An imbalance in this relationship results in dysbiosis, whereby pathogenic bacteria prevail on commensals, causing damage in the intestinal epithelial barrier as well as allowing bacterial invasion and inflammation. Acts as a regulator of appetite by sensing MDP in a subset of brain neurons: microbiota-derived MDP reach the brain, where they bind and activate NOD2 in inhibitory hypothalamic neurons, decreasing neuronal activity, thereby regulating satiety and body temperature. NOD2-dependent MDP-sensing of bacterial cell walls in the intestinal epithelial compartment contributes to sustained postnatal growth upon undernutrition. Also plays a role in antiviral response by acting as a sensor of single-stranded RNA (ssRNA) from viruses: upon ssRNA-binding, interacts with MAVS, leading to activation of interferon regulatory factor-3/IRF3 and expression of type I interferon. Also acts as a regulator of autophagy in dendritic cells via its interaction with ATG16L1, possibly by recruiting ATG16L1 at the site of bacterial entry. NOD2 activation in the small intestine crypt also contributes to intestinal stem cells survival and function: acts by promoting mitophagy via its association with ATG16L1. In addition to its main role in innate immunity, also regulates the adaptive immune system by acting as regulator of helper T-cell and regulatory T-cells (Tregs). Besides recognizing pathogens, also involved in the endoplasmic reticulum stress response: acts by sensing and binding to the cytosolic metabolite sphingosine-1-phosphate generated in response to endoplasmic reticulum stress, initiating an inflammation process that leads to activation of the NF-kappa-B and MAP kinases signaling. May also be involved in NLRP1 activation following activation by MDP, leading to CASP1 activation and IL1B release in macrophages. The polypeptide is Nucleotide-binding oligomerization domain-containing protein 2 (Oryctolagus cuniculus (Rabbit)).